Reading from the N-terminus, the 206-residue chain is MDEDVLTTLKILIIGESGVGKSSLLLRFTDDTFDPELAATIGVDFKVKTISVDGNKAKLAIWDTAGQERFRTLTPSYYRGAQGVILVYDVTRRDTFVKLDNWLNELETYCTRNDIVNMLVGNKIDKENREVDRNEGLKFARKHSMLFIEASAKTCDGVQCAFEELVEKIIQTPGLWESENQNKGVKLSHREESRGGGACGGYCSVL.

The residue at position 1 (Met1) is an N-acetylmethionine. Positions 17, 20, 21, 22, 23, 34, 35, 40, 66, 123, and 125 each coordinate GTP. Mg(2+) is bound at residue Ser22. Short sequence motifs (switch) lie at residues 31–45 (DTFD…GVDF) and 63–80 (DTAG…YYRG). Thr40 lines the Mg(2+) pocket. Ser144 is modified (phosphoserine). Residue Ala152 coordinates GTP. Cys199 carries S-palmitoyl cysteine lipidation. Position 203 is a cysteine methyl ester (Cys203). Residue Cys203 is the site of S-geranylgeranyl cysteine attachment. Residues 204–206 (SVL) constitute a propeptide, removed in mature form.

The protein belongs to the small GTPase superfamily. Rab family. As to quaternary structure, interacts (in GTP-bound form) with ZFYVE1. Interacts with ZW10 and this interaction is enhanced in the presence of ZFYVE1. Interacts with BSCL2. It depends on Mg(2+) as a cofactor. In terms of tissue distribution, expression is high in the brain, moderate in the pituitary, and low in the liver. Detected in all tissues. Highly enriched on apical endocytic structures in polarized epithelial cells of kidney proximal tubules. Detected on both the apical and basolateral domains in epithelial cells of the intestine.

It is found in the endoplasmic reticulum membrane. The protein resides in the golgi apparatus. It localises to the cis-Golgi network membrane. Its subcellular location is the lipid droplet. The protein localises to the apical cell membrane. The enzyme catalyses GTP + H2O = GDP + phosphate + H(+). With respect to regulation, regulated by guanine nucleotide exchange factor (GEF) RAB3GAP1-RAB3GAP2 complex at the cis-Golgi membrane which promotes the exchange of bound GDP for free GTP. Regulated by GTPase activating protein (GAP) TBC1D20 at the ER membrane which increases the GTP hydrolysis activity. Inhibited by GDP dissociation inhibitors (GDIs) which prevent Rab-GDP dissociation. Functionally, the small GTPases Rab are key regulators of intracellular membrane trafficking, from the formation of transport vesicles to their fusion with membranes. Rabs cycle between an inactive GDP-bound form and an active GTP-bound form that is able to recruit to membranes different sets of downstream effectors directly responsible for vesicle formation, movement, tethering and fusion. RAB18 is required for the localization of ZFYVE1 to lipid droplets and for its function in mediating the formation of endoplasmic reticulum-lipid droplets (ER-LD) contacts. Also required for maintaining endoplasmic reticulum structure. Plays a role in apical endocytosis/recycling. Plays a key role in eye and brain development and neurodegeneration. The protein is Ras-related protein Rab-18 of Mus musculus (Mouse).